Reading from the N-terminus, the 355-residue chain is Probable nitronate monooxygenase (355 aa).

FMN-binding positions include N71, Q175, G180, G219, and 238–241; that span reads QMGT.

It belongs to the nitronate monooxygenase family. NMO class I subfamily. FMN serves as cofactor.

The enzyme catalyses 3 propionate 3-nitronate + 3 O2 + H2O = 3 3-oxopropanoate + 2 nitrate + nitrite + H2O2 + 3 H(+). Functionally, nitronate monooxygenase that uses molecular oxygen to catalyze the oxidative denitrification of alkyl nitronates. Acts on propionate 3-nitronate (P3N), the presumed physiological substrate. Probably functions in the detoxification of P3N, a metabolic poison produced by plants and fungi as a defense mechanism. The polypeptide is Probable nitronate monooxygenase (Staphylococcus saprophyticus subsp. saprophyticus (strain ATCC 15305 / DSM 20229 / NCIMB 8711 / NCTC 7292 / S-41)).